The following is an 833-amino-acid chain: Phenylalanine--tRNA ligase beta subunit (833 aa).

The region spanning 42 to 157 (ADLKGPLAVG…PEYEVGTDAI (116 aa)) is the tRNA-binding domain. The B5 domain maps to 411 to 485 (SAPHTITIPA…RLEGYENLPS (75 aa)). Mg(2+)-binding residues include aspartate 463, aspartate 469, glutamate 472, and glutamate 473. In terms of domain architecture, FDX-ACB spans 739-832 (STFPVATQDV…AAERTGAALR (94 aa)).

The protein belongs to the phenylalanyl-tRNA synthetase beta subunit family. Type 1 subfamily. As to quaternary structure, tetramer of two alpha and two beta subunits. Requires Mg(2+) as cofactor.

The protein localises to the cytoplasm. It catalyses the reaction tRNA(Phe) + L-phenylalanine + ATP = L-phenylalanyl-tRNA(Phe) + AMP + diphosphate + H(+). In Streptomyces avermitilis (strain ATCC 31267 / DSM 46492 / JCM 5070 / NBRC 14893 / NCIMB 12804 / NRRL 8165 / MA-4680), this protein is Phenylalanine--tRNA ligase beta subunit.